We begin with the raw amino-acid sequence, 173 residues long: Ribosome maturation factor RimM (173 aa).

A PRC barrel domain is found at 95 to 173 (EGEYYWRQLE…LMVVDWDPDF (79 aa)).

Belongs to the RimM family. As to quaternary structure, binds ribosomal protein uS19.

The protein localises to the cytoplasm. An accessory protein needed during the final step in the assembly of 30S ribosomal subunit, possibly for assembly of the head region. Essential for efficient processing of 16S rRNA. May be needed both before and after RbfA during the maturation of 16S rRNA. It has affinity for free ribosomal 30S subunits but not for 70S ribosomes. The protein is Ribosome maturation factor RimM of Hahella chejuensis (strain KCTC 2396).